Consider the following 268-residue polypeptide: Protein MSS18 (268 aa).

It to baculovirus occlusion-derived virus envelope protein E27 (ODV-E27).

Its subcellular location is the mitochondrion. Involved in splicing of intron aI5-beta of the mitochondrial COX1 transcript. This is Protein MSS18 (MSS18) from Saccharomyces cerevisiae (strain ATCC 204508 / S288c) (Baker's yeast).